A 589-amino-acid chain; its full sequence is Protein NRT1/ PTR FAMILY 4.7 (589 aa).

A run of 12 helical transmembrane segments spans residues 59–79 (GMLAASFVLVVEVLENLAFLA), 105–125 (AFMGTAFFLALLGGFLADAFF), 127–147 (TFHIYLVSAAIEFLGLMVLTV), 160–180 (VFLFVGLYLVALGVGGIKGSL), 201–221 (FFFNYFIFSLSCGALIAVTVV), 230–250 (WSYGFGVSTAAILISVPVFLA), 344–364 (IVIKILPIFMSTIMLNCCLAQ), 383–403 (FTVPPAALPVFPVVFMMILAP), 429–449 (IGTGLVLSIVAMAVAALVETK), 471–491 (LPITFLWVAIQYVFLGSADLF), 520–540 (LAMGYYFSSVLVSAVNFVTGL), and 560–580 (FYWLMCVLSGINFLHYLFWAS).

It belongs to the major facilitator superfamily. Proton-dependent oligopeptide transporter (POT/PTR) (TC 2.A.17) family. In terms of tissue distribution, expressed in flowers.

Its subcellular location is the membrane. The polypeptide is Protein NRT1/ PTR FAMILY 4.7 (NPF4.7) (Arabidopsis thaliana (Mouse-ear cress)).